An 88-amino-acid polypeptide reads, in one-letter code: MHLSLARSAVLMLLLLFALGNFVVVQSGLITRDVDNGQLTDNRRNLQTEWNPLSLFMSRRSCNNSCQSHSDCASHCICTFRGCGAVNG.

A signal peptide spans 1–27; that stretch reads MHLSLARSAVLMLLLLFALGNFVVVQS. The propeptide occupies 28–58; it reads GLITRDVDNGQLTDNRRNLQTEWNPLSLFMS. 3 disulfide bridges follow: C62/C76, C66/C78, and C72/C83. An Asparagine amide modification is found at N87.

This sequence belongs to the conotoxin P superfamily. In terms of tissue distribution, expressed by the venom duct.

It is found in the secreted. Neurotoxin. In vivo, elicits 'spasmodic' symptomatology. The sequence is that of Conotoxin Gm9.1 from Conus gloriamaris (Glory-of-the-Sea cone).